Consider the following 199-residue polypeptide: Chaperone protein TorD (199 aa).

It belongs to the TorD/DmsD family. TorD subfamily.

It localises to the cytoplasm. In terms of biological role, involved in the biogenesis of TorA. Acts on TorA before the insertion of the molybdenum cofactor and, as a result, probably favors a conformation of the apoenzyme that is competent for acquiring the cofactor. This Escherichia coli O139:H28 (strain E24377A / ETEC) protein is Chaperone protein TorD.